Consider the following 198-residue polypeptide: MASGNAQIGKSAPDFTATAVVDGAFKEIKLSDYRGKYVVLFFYPLDFTFVCPTEIIAFSDHAEDFRKLGCEVLGVSVDSQFTHLAWINTPRKEGGLGPLNIPLLADVTKSLSQNYGVLKNDEGIAYRGLFIIDAKGVLRQITVNDLPVGRSVDEALRLVQAFQYTDEHGEVCPAGWKPGSDTIKPNVDDSKEYFSKHN.

Alanine 2 is modified (N-acetylalanine). In terms of domain architecture, Thioredoxin spans 6 to 164; sequence AQIGKSAPDF…ALRLVQAFQY (159 aa). Serine 11 is subject to Phosphoserine. Cysteine 51 functions as the Cysteine sulfenic acid (-SOH) intermediate in the catalytic mechanism. Phosphoserine is present on serine 112. Threonine 182 carries the phosphothreonine modification. Lysine 196 carries the post-translational modification N6-acetyllysine.

It belongs to the peroxiredoxin family. AhpC/Prx1 subfamily. In terms of assembly, homodimer; disulfide-linked, upon oxidation. 5 homodimers assemble to form a ring-like decamer. Interacts with TIPIN. The enzyme can be inactivated by further oxidation of the cysteine sulfenic acid (C(P)-SOH) to sulphinic acid (C(P)-SO2H) instead of its condensation to a disulfide bond. It can be reactivated by forming a transient disulfide bond with sulfiredoxin SRXN1, which reduces the cysteine sulfinic acid in an ATP- and Mg-dependent manner. Post-translationally, acetylation increases resistance to transition to high molecular-mass complexes. Deacetylated by HDAC6 which decreases reducing activity. In terms of tissue distribution, widely expressed with highest levels in bone marrow. High levels also found in heart, brain, kidney and skeletal muscle. Lower levels in liver, lung and thymus.

The protein localises to the cytoplasm. The catalysed reaction is a hydroperoxide + [thioredoxin]-dithiol = an alcohol + [thioredoxin]-disulfide + H2O. Functionally, thiol-specific peroxidase that catalyzes the reduction of hydrogen peroxide and organic hydroperoxides to water and alcohols, respectively. Plays a role in cell protection against oxidative stress by detoxifying peroxides and as sensor of hydrogen peroxide-mediated signaling events. Might participate in the signaling cascades of growth factors and tumor necrosis factor-alpha by regulating the intracellular concentrations of H(2)O(2). This is Peroxiredoxin-2 (Prdx2) from Mus musculus (Mouse).